The chain runs to 395 residues: Torsin-3A (395 aa).

The signal sequence occupies residues methionine 1 to glycine 24. N-linked (GlcNAc...) asparagine glycosylation is present at asparagine 120. Glycine 165–asparagine 172 contacts ATP.

The protein belongs to the ClpA/ClpB family. Torsin subfamily. As to quaternary structure, may not form homohexamers. Post-translationally, N-glycosylated.

The protein localises to the cytoplasm. It is found in the endoplasmic reticulum lumen. The polypeptide is Torsin-3A (Tor3a) (Rattus norvegicus (Rat)).